Here is a 229-residue protein sequence, read N- to C-terminus: UPF0758 protein Caur_3603 (229 aa).

The MPN domain occupies proline 105 to glycine 227. Zn(2+)-binding residues include histidine 176, histidine 178, and aspartate 189. Positions histidine 176–aspartate 189 match the JAMM motif motif.

This sequence belongs to the UPF0758 family.

This is UPF0758 protein Caur_3603 from Chloroflexus aurantiacus (strain ATCC 29366 / DSM 635 / J-10-fl).